Here is a 1521-residue protein sequence, read N- to C-terminus: Retroelement silencing factor 1 (1521 aa).

Lysine 223 is covalently cross-linked (Glycyl lysine isopeptide (Lys-Gly) (interchain with G-Cter in SUMO2)). The tract at residues 621 to 640 (EKQHKPIQGDPDIADSSLGK) is disordered. At serine 910 the chain carries Phosphoserine. Threonine 996 carries the phosphothreonine modification. 2 stretches are compositionally biased toward polar residues: residues 1093–1105 (KNMP…SQES) and 1124–1142 (LSSN…QSVS). 3 disordered regions span residues 1093–1147 (KNMP…EKKK), 1204–1230 (ERAS…KSTR), and 1312–1335 (EASR…PDKM). Phosphoserine is present on serine 1142. Residues 1214 to 1228 (PSPESSDPKGSSSKS) are compositionally biased toward low complexity. The span at 1325-1335 (GKFDGKQPDKM) shows a compositional bias: basic and acidic residues. A Glycyl lysine isopeptide (Lys-Gly) (interchain with G-Cter in SUMO2) cross-link involves residue lysine 1411. Disordered regions lie at residues 1425–1444 (DKQD…VQVS) and 1457–1485 (IPTR…SADE). Basic and acidic residues predominate over residues 1467 to 1476 (SQRDSADSRL). Residues serine 1482 and serine 1514 each carry the phosphoserine modification.

In terms of assembly, interacts with SETDB1.

It is found in the nucleus. In terms of biological role, plays a role in the regulation of imprinted gene expression, regulates repressive epigenetic modifications associated with SETDB1. Required for the recruitment or accumulation of SETDB1 to the endogenous retroviruses (ERVs) and maintenance of repressive chromatin configuration, contributing to a subset of the SETDB1-dependent ERV silencing in embryonic stem cells. The protein is Retroelement silencing factor 1 of Mus musculus (Mouse).